The primary structure comprises 209 residues: Large ribosomal subunit protein uL3 (209 aa).

The disordered stretch occupies residues 132 to 153; it reads ATHGNSLSHRVPGSIGQNQTPG. The residue at position 150 (Q150) is an N5-methylglutamine.

The protein belongs to the universal ribosomal protein uL3 family. In terms of assembly, part of the 50S ribosomal subunit. Forms a cluster with proteins L14 and L19. Post-translationally, methylated by PrmB.

Its function is as follows. One of the primary rRNA binding proteins, it binds directly near the 3'-end of the 23S rRNA, where it nucleates assembly of the 50S subunit. This is Large ribosomal subunit protein uL3 from Erwinia tasmaniensis (strain DSM 17950 / CFBP 7177 / CIP 109463 / NCPPB 4357 / Et1/99).